The chain runs to 92 residues: Large ribosomal subunit protein bL27 (92 aa).

Positions 1–8 (MLMNLQFF) are excised as a propeptide. Residues 11–30 (HKGGGSTANGRDSAGRRLGA) form a disordered region.

This sequence belongs to the bacterial ribosomal protein bL27 family. The N-terminus is cleaved by ribosomal processing cysteine protease Prp.

The polypeptide is Large ribosomal subunit protein bL27 (Lactiplantibacillus plantarum (strain ATCC BAA-793 / NCIMB 8826 / WCFS1) (Lactobacillus plantarum)).